We begin with the raw amino-acid sequence, 442 residues long: tRNA modification GTPase MnmE (442 aa).

Residues Arg-21, Glu-79, and Lys-118 each coordinate (6S)-5-formyl-5,6,7,8-tetrahydrofolate. Residues 214 to 367 enclose the TrmE-type G domain; it reads GFKIAIVGKP…LKEELQNYLN (154 aa). Residue Asn-224 participates in K(+) binding. GTP is bound by residues 224-229, 243-249, and 268-271; these read NVGKSS, SDIAGTT, and DTAG. Ser-228 contributes to the Mg(2+) binding site. 3 residues coordinate K(+): Ser-243, Ile-245, and Thr-248. Thr-249 is a binding site for Mg(2+). Position 442 (Lys-442) interacts with (6S)-5-formyl-5,6,7,8-tetrahydrofolate.

Belongs to the TRAFAC class TrmE-Era-EngA-EngB-Septin-like GTPase superfamily. TrmE GTPase family. In terms of assembly, homodimer. Heterotetramer of two MnmE and two MnmG subunits. The cofactor is K(+).

It localises to the cytoplasm. In terms of biological role, exhibits a very high intrinsic GTPase hydrolysis rate. Involved in the addition of a carboxymethylaminomethyl (cmnm) group at the wobble position (U34) of certain tRNAs, forming tRNA-cmnm(5)s(2)U34. In Campylobacter jejuni subsp. jejuni serotype O:2 (strain ATCC 700819 / NCTC 11168), this protein is tRNA modification GTPase MnmE.